A 1311-amino-acid chain; its full sequence is Kinase and exchange factor for Rac A (1311 aa).

In terms of domain architecture, Protein kinase spans 18–316; it reads LVFKDIIGKG…STIVTILESI (299 aa). ATP-binding positions include 24 to 32 and Lys-45; that span reads IGKGNFGCV. Asp-138 acts as the Proton acceptor in catalysis. 3 disordered regions span residues 169-201, 360-426, and 446-471; these read NGSD…KNNG, QQQS…TTTT, and PLSK…LIGS. The span at 451-471 shows a compositional bias: low complexity; the sequence is QQQQQRNQNSSIIDNNSLIGS. The IQ domain maps to 650 to 679; that stretch reads ELNLIIKLQSRIRGWLVRRRYKIFLSNWKL. In terms of domain architecture, DH spans 691-927; it reads QWIRLFNQLI…RETSNYIQSQ (237 aa). Composition is skewed to low complexity over residues 994–1021 and 1031–1044; these read SKYN…TNSN and STSN…GNNN. 3 disordered regions span residues 994 to 1044, 1114 to 1145, and 1208 to 1311; these read SKYN…GNNN, NNPN…NGSI, and GTST…FSKD. The segment covering 1117 to 1137 has biased composition (gly residues); the sequence is NGGGSNNNSIGGGGGGRGGSG. Residues 1208-1229 are compositionally biased toward polar residues; it reads GTSTPERKTSLVNMSPSTTSSL. A compositionally biased stretch (low complexity) spans 1230-1245; sequence NNIDSNYNNNNNNVTN. Residues 1246–1257 are compositionally biased toward polar residues; the sequence is TPIKSVTSSPSI. The segment covering 1263–1276 has biased composition (low complexity); sequence NDNNQQPQLPSQPN. The segment covering 1277 to 1287 has biased composition (polar residues); it reads EEFQFTVPTTP. A compositionally biased stretch (basic residues) spans 1290 to 1303; sequence KKKKRGSFSSKLKR.

The protein belongs to the protein kinase superfamily. TKL Ser/Thr protein kinase family. The cofactor is Mg(2+).

The catalysed reaction is L-seryl-[protein] + ATP = O-phospho-L-seryl-[protein] + ADP + H(+). The enzyme catalyses L-threonyl-[protein] + ATP = O-phospho-L-threonyl-[protein] + ADP + H(+). This chain is Kinase and exchange factor for Rac A (kxcA), found in Dictyostelium discoideum (Social amoeba).